We begin with the raw amino-acid sequence, 122 residues long: MIQMQTNLDVADNSGARRVMCIKVLGGSKRRYATVGDIIVVSIKEAIPRGKVKKGDVMKAVVVRVRKDIRRADGSVIRFDRNAAVLINNQSEPVGTRIFGPVPRELRAKNHMKIISLAPEVL.

The protein belongs to the universal ribosomal protein uL14 family. In terms of assembly, part of the 50S ribosomal subunit. Forms a cluster with proteins L3 and L19. In the 70S ribosome, L14 and L19 interact and together make contacts with the 16S rRNA in bridges B5 and B8.

In terms of biological role, binds to 23S rRNA. Forms part of two intersubunit bridges in the 70S ribosome. The polypeptide is Large ribosomal subunit protein uL14 (Bradyrhizobium sp. (strain BTAi1 / ATCC BAA-1182)).